A 629-amino-acid polypeptide reads, in one-letter code: Histone-lysine N-methyltransferase set9 (629 aa).

The SET domain maps to 120 to 234 (CPFEVTTTNR…IGEEITVSYG (115 aa)). Polar residues-rich tracts occupy residues 264–274 (SEASSTASTPA), 338–350 (EQNTKIAVETTTD), 359–376 (NGVTENESNARVSENQRA), and 390–400 (ESQNSSASTAP). 2 disordered regions span residues 264–400 (SEAS…STAP) and 586–629 (VSFG…RMTM). Residues 597 to 614 (SEPRTETEDSEACDERRN) are compositionally biased toward basic and acidic residues.

The protein belongs to the class V-like SAM-binding methyltransferase superfamily. Histone-lysine methyltransferase family. Suvar4-20 subfamily.

It is found in the nucleus. The protein resides in the chromosome. The catalysed reaction is L-lysyl(20)-[histone H4] + 3 S-adenosyl-L-methionine = N(6),N(6),N(6)-trimethyl-L-lysyl(20)-[histone H4] + 3 S-adenosyl-L-homocysteine + 3 H(+). Its function is as follows. Histone methyltransferase that trimethylates 'Lys-20' of histone H4 to form H4K20me3. This is Histone-lysine N-methyltransferase set9 (set9) from Aspergillus terreus (strain NIH 2624 / FGSC A1156).